The primary structure comprises 886 residues: Desmocollin-1 (886 aa).

Residues 1–29 (MAVACAAPGSTFSKQLLFFLLVLVLFCDA) form the signal peptide. A propeptide spanning residues 30–134 (CQKVSLHVPS…KEPVHNRSKR (105 aa)) is cleaved from the precursor. Asparagine 130 and asparagine 165 each carry an N-linked (GlcNAc...) asparagine glycan. 5 consecutive Cadherin domains span residues 135-242 (RWAP…APYF), 243-354 (ETKL…SPYF), 355-471 (TQTS…GPEC), 472-575 (QPPV…DHPP), and 576-682 (QIDK…EERD). Residues 135-691 (RWAPIPCSLM…DAKPNIILGK (557 aa)) lie on the Extracellular side of the membrane. Phosphothreonine is present on threonine 385. Asparagine 546 carries an N-linked (GlcNAc...) (high mannose) asparagine glycan. Asparagine 613 carries an N-linked (GlcNAc...) asparagine glycan. A helical membrane pass occupies residues 692–714 (WAILAMVLGSALLLCILFTCFCV). The Cytoplasmic portion of the chain corresponds to 715 to 886 (TTTKRTVKKC…RTLAKTCVKK (172 aa)).

In terms of assembly, binds to JUP/plakoglobin. In terms of tissue distribution, expressed in the epidermis and inner root sheaths of hair follicles (at protein level).

It localises to the cell membrane. It is found in the cell junction. The protein resides in the desmosome. Its function is as follows. A component of desmosome cell-cell junctions which are required for positive regulation of cellular adhesion. Required for desmosome adhesion strength between the granular layers of the epidermis, as a result moderates epidermal proliferation and differentiation. Is therefore required to maintain postnatal epidermal barrier function and normal hair follicle morphology into adulthood. The polypeptide is Desmocollin-1 (Dsc1) (Mus musculus (Mouse)).